An 858-amino-acid polypeptide reads, in one-letter code: Leucine--tRNA ligase (858 aa).

The 'HIGH' region motif lies at 53 to 63 (PYPSGNLHMGH). A 'KMSKS' region motif is present at residues 622-626 (KMSKS). K625 provides a ligand contact to ATP.

The protein belongs to the class-I aminoacyl-tRNA synthetase family.

It is found in the cytoplasm. It carries out the reaction tRNA(Leu) + L-leucine + ATP = L-leucyl-tRNA(Leu) + AMP + diphosphate. The polypeptide is Leucine--tRNA ligase (Prochlorococcus marinus subsp. pastoris (strain CCMP1986 / NIES-2087 / MED4)).